The primary structure comprises 382 residues: Mannitol-1-phosphate 5-dehydrogenase (382 aa).

3–14 (AVHFGAGNIGRG) provides a ligand contact to NAD(+).

It belongs to the mannitol dehydrogenase family.

It carries out the reaction D-mannitol 1-phosphate + NAD(+) = beta-D-fructose 6-phosphate + NADH + H(+). The sequence is that of Mannitol-1-phosphate 5-dehydrogenase (mtlD) from Geobacillus stearothermophilus (Bacillus stearothermophilus).